Consider the following 463-residue polypeptide: 23S rRNA (uracil(1939)-C(5))-methyltransferase RlmD (463 aa).

The region spanning 6–76 is the TRAM domain; sequence KSRKPQQPEY…KRLEEAEMVA (71 aa). Positions 90, 96, 99, and 178 each coordinate [4Fe-4S] cluster. 6 residues coordinate S-adenosyl-L-methionine: Gln288, Phe317, Asn322, Glu341, Asp368, and Asp389. Residue Cys415 is the Nucleophile of the active site.

Belongs to the class I-like SAM-binding methyltransferase superfamily. RNA M5U methyltransferase family. RlmD subfamily.

The enzyme catalyses uridine(1939) in 23S rRNA + S-adenosyl-L-methionine = 5-methyluridine(1939) in 23S rRNA + S-adenosyl-L-homocysteine + H(+). Its function is as follows. Catalyzes the formation of 5-methyl-uridine at position 1939 (m5U1939) in 23S rRNA. In Acinetobacter baumannii (strain SDF), this protein is 23S rRNA (uracil(1939)-C(5))-methyltransferase RlmD.